Reading from the N-terminus, the 340-residue chain is Coproporphyrin III ferrochelatase (340 aa).

Fe-coproporphyrin III-binding residues include Ser-52 and Tyr-121. 2 residues coordinate Fe(2+): His-177 and Glu-260.

The protein belongs to the ferrochelatase family.

It is found in the cytoplasm. It carries out the reaction Fe-coproporphyrin III + 2 H(+) = coproporphyrin III + Fe(2+). It participates in porphyrin-containing compound metabolism; protoheme biosynthesis. Involved in coproporphyrin-dependent heme b biosynthesis. Catalyzes the insertion of ferrous iron into coproporphyrin III to form Fe-coproporphyrin III. The polypeptide is Coproporphyrin III ferrochelatase (Mycobacteroides abscessus (strain ATCC 19977 / DSM 44196 / CCUG 20993 / CIP 104536 / JCM 13569 / NCTC 13031 / TMC 1543 / L948) (Mycobacterium abscessus)).